A 741-amino-acid polypeptide reads, in one-letter code: Phosphoribosylformylglycinamidine synthase subunit PurL (741 aa).

Histidine 53 is a catalytic residue. ATP contacts are provided by tyrosine 56 and lysine 95. Glutamate 97 lines the Mg(2+) pocket. Residues 98-101 (SHNH) and arginine 120 each bind substrate. Histidine 99 (proton acceptor) is an active-site residue. Aspartate 121 serves as a coordination point for Mg(2+). Glutamine 244 serves as a coordination point for substrate. Position 274 (aspartate 274) interacts with Mg(2+). 318–320 (ESQ) is a substrate binding site. ATP contacts are provided by aspartate 501 and glycine 538. Asparagine 539 lines the Mg(2+) pocket. Residue serine 541 participates in substrate binding.

This sequence belongs to the FGAMS family. In terms of assembly, monomer. Part of the FGAM synthase complex composed of 1 PurL, 1 PurQ and 2 PurS subunits.

The protein localises to the cytoplasm. The catalysed reaction is N(2)-formyl-N(1)-(5-phospho-beta-D-ribosyl)glycinamide + L-glutamine + ATP + H2O = 2-formamido-N(1)-(5-O-phospho-beta-D-ribosyl)acetamidine + L-glutamate + ADP + phosphate + H(+). It functions in the pathway purine metabolism; IMP biosynthesis via de novo pathway; 5-amino-1-(5-phospho-D-ribosyl)imidazole from N(2)-formyl-N(1)-(5-phospho-D-ribosyl)glycinamide: step 1/2. Part of the phosphoribosylformylglycinamidine synthase complex involved in the purines biosynthetic pathway. Catalyzes the ATP-dependent conversion of formylglycinamide ribonucleotide (FGAR) and glutamine to yield formylglycinamidine ribonucleotide (FGAM) and glutamate. The FGAM synthase complex is composed of three subunits. PurQ produces an ammonia molecule by converting glutamine to glutamate. PurL transfers the ammonia molecule to FGAR to form FGAM in an ATP-dependent manner. PurS interacts with PurQ and PurL and is thought to assist in the transfer of the ammonia molecule from PurQ to PurL. The protein is Phosphoribosylformylglycinamidine synthase subunit PurL of Latilactobacillus sakei subsp. sakei (strain 23K) (Lactobacillus sakei subsp. sakei).